The following is a 296-amino-acid chain: Sulfotransferase 1C2 (296 aa).

49 to 54 (KSGTTW) provides a ligand contact to 3'-phosphoadenylyl sulfate. A substrate-binding site is contributed by 107–109 (RTH). The active-site Proton acceptor is the His109. Residues Arg131, Ser139, Tyr194, and 228 to 233 (TSFEKM) contribute to the 3'-phosphoadenylyl sulfate site. A Phosphoserine modification is found at Ser139. Phosphoserine is present on Ser254. 256–260 (FMRKG) lines the 3'-phosphoadenylyl sulfate pocket.

It belongs to the sulfotransferase 1 family. Found in gastrointestinal tract tissues, liver and kidney.

It localises to the cytoplasm. It is found in the lysosome. The protein localises to the mitochondrion. The enzyme catalyses a phenol + 3'-phosphoadenylyl sulfate = an aryl sulfate + adenosine 3',5'-bisphosphate + H(+). The catalysed reaction is cholesterol + 3'-phosphoadenylyl sulfate = cholesterol sulfate + adenosine 3',5'-bisphosphate + H(+). In terms of biological role, sulfotransferase that utilizes 3'-phospho-5'-adenylyl sulfate (PAPS) to catalyze the sulfate conjugation of phenolic compounds. Does not transfer sulfate to steroids, dopamine, acetaminophen, or alpha-naphthol. Except in mitochondria, where it can add sulfate to cholesterol producing cholesterol sulfate, which alters mitochondrial membrane organization, and impacts protein complex mobility increasing state-III respiration, thereby modulating mitochondrial respiration. Catalyzes the sulfation of the carcinogenic N-hydroxy-2-acetylaminofluorene leading to highly reactive intermediates capable of forming DNA adducts, potentially resulting in mutagenesis. This Oryctolagus cuniculus (Rabbit) protein is Sulfotransferase 1C2 (SULT1C2).